The sequence spans 707 residues: SPX domain-containing membrane protein At4g11810 (707 aa).

Residues 2–145 (VAFGKKLKER…GYRFTNYYVK (144 aa)) form the SPX domain. The next 6 helical transmembrane spans lie at 252–272 (FMSL…TYII), 283–303 (LGAA…AQLF), 320–340 (LIFS…AYDF), 342–361 (SLAL…ARAV), 380–400 (AGFV…AGLL), and 416–436 (LPGW…AISF). Residues 481–498 (EETEHDEEDDGDGSEESS) show a composition bias toward acidic residues. The segment at 481–503 (EETEHDEEDDGDGSEESSDDSRK) is disordered. The next 5 helical transmembrane spans lie at 523–543 (LLIY…SSVV), 557–577 (IFLF…GSYI), 586–606 (ILLA…HVVI), 614–634 (VISG…NLSL), and 679–699 (MLLN…ILAT).

The protein belongs to the major facilitator superfamily.

The protein localises to the membrane. This chain is SPX domain-containing membrane protein At4g11810, found in Arabidopsis thaliana (Mouse-ear cress).